The sequence spans 498 residues: NAD(P)H-quinone oxidoreductase chain 4, chloroplastic (498 aa).

14 helical membrane passes run 4–24 (FPWLTTVVVLPIVGGSLIVLF), 37–57 (YCICFIDLLLIAYVFCYHFEL), 80–100 (FGIDGLSLGPILLTGFITTLA), 112–129 (KLFYFLMLAMYSGQLGTF), 134–154 (ILLFFIMWELELIPVYLLLSM), 167–187 (FILYTAGSSVFLLLGILGMSL), 208–228 (ALEIIFYMGFLIAFAVKSPII), 242–262 (HYSTCMLLAGILLKMGAYGLV), 272–292 (AHSIFCPWLMLLGSIQIIYAA), 305–325 (IAYSSVSHMGFLILGIGSISE), 330–350 (GAILQIISHGFIGAALFFLAG), 386–406 (LALPGMSGFVAELIVLLGIIT), 416–436 (ILITFVTAIGMILTPIYSLSI), and 463–483 (FISISILIPVISIGIYPDFIF).

The protein belongs to the complex I subunit 4 family.

The protein resides in the plastid. It is found in the chloroplast thylakoid membrane. It catalyses the reaction a plastoquinone + NADH + (n+1) H(+)(in) = a plastoquinol + NAD(+) + n H(+)(out). The catalysed reaction is a plastoquinone + NADPH + (n+1) H(+)(in) = a plastoquinol + NADP(+) + n H(+)(out). This chain is NAD(P)H-quinone oxidoreductase chain 4, chloroplastic, found in Phaseolus vulgaris (Kidney bean).